Consider the following 350-residue polypeptide: Biotin synthase (350 aa).

One can recognise a Radical SAM core domain in the interval 54–278 (REIQLSTLLS…TMPQSYVRLS (225 aa)). Residues Cys-69, Cys-73, and Cys-76 each contribute to the [4Fe-4S] cluster site. The [2Fe-2S] cluster site is built by Cys-113, Cys-144, Cys-204, and Arg-276.

Belongs to the radical SAM superfamily. Biotin synthase family. In terms of assembly, homodimer. Requires [4Fe-4S] cluster as cofactor. It depends on [2Fe-2S] cluster as a cofactor.

It catalyses the reaction (4R,5S)-dethiobiotin + (sulfur carrier)-SH + 2 reduced [2Fe-2S]-[ferredoxin] + 2 S-adenosyl-L-methionine = (sulfur carrier)-H + biotin + 2 5'-deoxyadenosine + 2 L-methionine + 2 oxidized [2Fe-2S]-[ferredoxin]. Its pathway is cofactor biosynthesis; biotin biosynthesis; biotin from 7,8-diaminononanoate: step 2/2. Catalyzes the conversion of dethiobiotin (DTB) to biotin by the insertion of a sulfur atom into dethiobiotin via a radical-based mechanism. This chain is Biotin synthase, found in Neisseria meningitidis serogroup C (strain 053442).